Here is a 157-residue protein sequence, read N- to C-terminus: Endoribonuclease YbeY (157 aa).

Zn(2+) contacts are provided by His-121, His-125, and Asp-131.

It belongs to the endoribonuclease YbeY family. Zn(2+) is required as a cofactor.

It is found in the cytoplasm. In terms of biological role, single strand-specific metallo-endoribonuclease involved in late-stage 70S ribosome quality control and in maturation of the 3' terminus of the 16S rRNA. This Salinibacter ruber (strain DSM 13855 / M31) protein is Endoribonuclease YbeY.